The sequence spans 160 residues: Cytochrome b6-f complex subunit 4 (160 aa).

The next 3 helical transmembrane spans lie at 36-56 (LLYI…GLAV), 95-115 (LLGV…PFPE), and 131-151 (TVFS…ALPI).

The protein belongs to the cytochrome b family. PetD subfamily. As to quaternary structure, the 4 large subunits of the cytochrome b6-f complex are cytochrome b6, subunit IV (17 kDa polypeptide, petD), cytochrome f and the Rieske protein, while the 4 small subunits are petG, petL, petM and petN. The complex functions as a dimer.

It is found in the plastid. The protein localises to the chloroplast thylakoid membrane. In terms of biological role, component of the cytochrome b6-f complex, which mediates electron transfer between photosystem II (PSII) and photosystem I (PSI), cyclic electron flow around PSI, and state transitions. The chain is Cytochrome b6-f complex subunit 4 from Huperzia lucidula (Shining clubmoss).